A 374-amino-acid polypeptide reads, in one-letter code: Growth/differentiation factor 8 (374 aa).

Residues 1 to 22 (MHFTQVLISLSVLIACGPVGYG) form the signal peptide. The propeptide occupies 23 to 265 (DITAHQQPST…ISEGPKRIRR (243 aa)). Residues asparagine 72 and asparagine 274 are each glycosylated (N-linked (GlcNAc...) asparagine). Cystine bridges form between cysteine 271/cysteine 281, cysteine 280/cysteine 339, cysteine 308/cysteine 371, and cysteine 312/cysteine 373.

Belongs to the TGF-beta family. As to quaternary structure, homodimer; disulfide-linked. In terms of tissue distribution, predominantly expressed in muscle. At hatching, expression is strongest in the skin epithelium, and is also found in the retina and brain. From day 28, expressed in skeletal muscle. In the adult, highest expression is seen in the gastrointestinal tract, brain, muscle, heart and testis. Also expressed in the adult pharynx, kidney, spleen, liver, gill, eyes, skin, swim bladder and ovary.

It is found in the secreted. Acts specifically as a negative regulator of skeletal muscle growth. May down-regulate muscle-specific transcription factors such as myod and myog. The protein is Growth/differentiation factor 8 (mstnb) of Danio rerio (Zebrafish).